A 1233-amino-acid chain; its full sequence is STE20-like serine/threonine-protein kinase (1233 aa).

Residue Ser-14 is modified to Phosphoserine. Positions Trp-34–Val-292 constitute a Protein kinase domain. ATP-binding positions include Leu-40–Val-48 and Lys-63. The active-site Proton acceptor is the Asp-155. Thr-183 bears the Phosphothreonine mark. Phosphoserine is present on Ser-189. Residues Ala-309–Asp-351 are disordered. The segment covering Thr-312–Glu-328 has biased composition (acidic residues). Phosphoserine occurs at positions 340, 341, 344, 347, 348, 354, and 372. The span at Val-363–Ser-399 shows a compositional bias: basic and acidic residues. Disordered stretches follow at residues Val-363–Arg-453, Val-498–Glu-650, Ala-663–Leu-761, and Ala-772–Lys-791. A compositionally biased stretch (polar residues) spans Pro-432–Asp-441. Residues Leu-518–Lys-529 are compositionally biased toward basic and acidic residues. A phosphoserine mark is found at Ser-543, Ser-561, and Ser-566. The segment covering Gly-598–Pro-607 has biased composition (basic and acidic residues). Over residues Gln-619–Thr-630 the composition is skewed to polar residues. 3 positions are modified to phosphoserine: Ser-643, Ser-647, and Ser-666. Positions Ala-690–Ser-701 are enriched in low complexity. Polar residues predominate over residues Thr-746–Leu-761. Ser-775 and Ser-777 each carry phosphoserine. Position 812 is a phosphothreonine (Thr-812). A Phosphoserine modification is found at Ser-816. The stretch at Leu-824–Ala-1067 forms a coiled coil. Residues Asp-873–Glu-908 form the UVR domain. The segment at Lys-944–Gln-963 is disordered. The span at Gln-954–Gln-963 shows a compositional bias: low complexity. Position 1095 is a phosphothreonine (Thr-1095). Residues Ala-1107–Arg-1181 are a coiled coil. Positions Gln-1109–Met-1129 are disordered.

It belongs to the protein kinase superfamily. STE Ser/Thr protein kinase family. STE20 subfamily. Post-translationally, proteolytically cleaved by caspase-3. In terms of processing, autophosphorylated. As to expression, ubiquitously expressed.

It localises to the cytoplasm. The enzyme catalyses L-seryl-[protein] + ATP = O-phospho-L-seryl-[protein] + ADP + H(+). The catalysed reaction is L-threonyl-[protein] + ATP = O-phospho-L-threonyl-[protein] + ADP + H(+). Mediates apoptosis and actin stress fiber dissolution. The sequence is that of STE20-like serine/threonine-protein kinase (Slk) from Mus musculus (Mouse).